The sequence spans 159 residues: Probable epoxidase scpX (159 aa).

A signal peptide spans 1 to 25; sequence MATLIRLLRLLPVASSSAVLMFALD. Helical transmembrane passes span 59–79 and 96–116; these read WVLI…LFIS and LLFS…IAAI. N-linked (GlcNAc...) asparagine glycosylation is found at asparagine 124 and asparagine 136. Residues 139–159 form a helical membrane-spanning segment; sequence RALLTDLPAWLCFIAAALKAL.

This sequence belongs to the epoxidase xenD family.

Its subcellular location is the membrane. It participates in mycotoxin biosynthesis. Its function is as follows. Probable epoxidase; part of the gene scp cluster that mediates the biosynthesis of a hirsutellone-like compound that has still to be identified. The protein is Probable epoxidase scpX of Mollisia scopiformis (Conifer needle endophyte fungus).